The chain runs to 505 residues: Trans-cinnamate 4-monooxygenase (505 aa).

A helical membrane pass occupies residues 3–23 (LLLLEKTLLGSFVAILVAILV). (E)-cinnamate-binding positions include 213–218 (RSRLAQ) and Ala-306. Position 447 (Cys-447) interacts with heme.

This sequence belongs to the cytochrome P450 family. Heme serves as cofactor.

It is found in the membrane. It carries out the reaction (E)-cinnamate + reduced [NADPH--hemoprotein reductase] + O2 = (E)-4-coumarate + oxidized [NADPH--hemoprotein reductase] + H2O + H(+). It functions in the pathway phenylpropanoid metabolism; trans-4-coumarate biosynthesis; trans-4-coumarate from trans-cinnamate: step 1/1. In terms of biological role, catalyzes the first oxidative step of the phenylpropanoid pathway in higher plants by transforming trans-cinnamate into p-coumarate. The compounds formed by this pathway are essential components for lignification, pollination, and defense against ultraviolet light, predators and pathogens. In Populus tremuloides (Quaking aspen), this protein is Trans-cinnamate 4-monooxygenase (CYP73A13).